The following is a 241-amino-acid chain: Uridylate kinase (241 aa).

Position 12–15 (12–15 (KLSG)) interacts with ATP. Gly54 serves as a coordination point for UMP. 2 residues coordinate ATP: Gly55 and Arg59. UMP-binding positions include Asp74 and 135-142 (TGNPFFTT). Positions 162, 168, and 171 each coordinate ATP.

The protein belongs to the UMP kinase family. Homohexamer.

Its subcellular location is the cytoplasm. It catalyses the reaction UMP + ATP = UDP + ADP. The protein operates within pyrimidine metabolism; CTP biosynthesis via de novo pathway; UDP from UMP (UMPK route): step 1/1. Its activity is regulated as follows. Inhibited by UTP. Functionally, catalyzes the reversible phosphorylation of UMP to UDP. This Magnetococcus marinus (strain ATCC BAA-1437 / JCM 17883 / MC-1) protein is Uridylate kinase.